A 505-amino-acid chain; its full sequence is Mannosylglucosyl-3-phosphoglycerate synthase (505 aa).

As to quaternary structure, monomer in solution.

The enzyme catalyses (2R)-2-O-(alpha-D-glucopyranosyl)-3-phospho-glycerate + GDP-alpha-D-mannose = (2R)-2-O-[alpha-D-mannopyranosyl-(1-&gt;2)-alpha-D-glucopyranosyl]-3-phospho-glycerate + GDP + H(+). Its activity is regulated as follows. Not strictly dependent on divalent cations, but the presence of Mn(2+), Ca(2+), Mg(2+) or Co(2+) stimulates activity. Involved in the biosynthesis of the compatible solute mannosylglucosylglycerate through a phosphorylating pathway. Catalyzes the conversion of glucosyl-3-phosphoglycerate (GPG) to mannosylglucosyl-3-phosphoglycerate (MGPG). In Petrotoga mobilis (strain DSM 10674 / SJ95), this protein is Mannosylglucosyl-3-phosphoglycerate synthase.